Consider the following 175-residue polypeptide: Acetyl-CoA decarbonylase/synthase complex subunit epsilon 2 (175 aa).

It belongs to the CdhB family. In terms of assembly, heterotetramer of two alpha and two epsilon subunits. The ACDS complex is made up of alpha, epsilon, beta, gamma and delta subunits with a probable stoichiometry of (alpha(2)epsilon(2))(4)-beta(8)-(gamma(1)delta(1))(8).

Part of a complex that catalyzes the reversible cleavage of acetyl-CoA, allowing autotrophic growth from CO(2). The alpha-epsilon subcomponent functions as a carbon monoxide dehydrogenase. The precise role of the epsilon subunit is unclear; it may have a stabilizing role within the alpha(2)epsilon(2) component and/or be involved in electron transfer to FAD during a potential FAD-mediated CO oxidation. In Archaeoglobus fulgidus (strain ATCC 49558 / DSM 4304 / JCM 9628 / NBRC 100126 / VC-16), this protein is Acetyl-CoA decarbonylase/synthase complex subunit epsilon 2 (cdhB2).